Reading from the N-terminus, the 295-residue chain is Pyridoxal 5'-phosphate synthase subunit PdxS (295 aa).

Residue Asp-23 coordinates D-ribose 5-phosphate. Catalysis depends on Lys-80, which acts as the Schiff-base intermediate with D-ribose 5-phosphate. Gly-152 is a binding site for D-ribose 5-phosphate. Arg-164 lines the D-glyceraldehyde 3-phosphate pocket. Residues Gly-213 and Gly-234–Ser-235 each bind D-ribose 5-phosphate.

Belongs to the PdxS/SNZ family. As to quaternary structure, in the presence of PdxT, forms a dodecamer of heterodimers.

It catalyses the reaction aldehydo-D-ribose 5-phosphate + D-glyceraldehyde 3-phosphate + L-glutamine = pyridoxal 5'-phosphate + L-glutamate + phosphate + 3 H2O + H(+). The protein operates within cofactor biosynthesis; pyridoxal 5'-phosphate biosynthesis. Functionally, catalyzes the formation of pyridoxal 5'-phosphate from ribose 5-phosphate (RBP), glyceraldehyde 3-phosphate (G3P) and ammonia. The ammonia is provided by the PdxT subunit. Can also use ribulose 5-phosphate and dihydroxyacetone phosphate as substrates, resulting from enzyme-catalyzed isomerization of RBP and G3P, respectively. This is Pyridoxal 5'-phosphate synthase subunit PdxS from Methanopyrus kandleri (strain AV19 / DSM 6324 / JCM 9639 / NBRC 100938).